Consider the following 214-residue polypeptide: Orotate phosphoribosyltransferase (214 aa).

Lys-26 contacts 5-phospho-alpha-D-ribose 1-diphosphate. Residue 34–35 participates in orotate binding; sequence FF. 5-phospho-alpha-D-ribose 1-diphosphate-binding positions include 72 to 73, Arg-99, Lys-100, Lys-103, His-105, and 124 to 132; these read YK and DDVITAGTA. Orotate contacts are provided by Thr-128 and Arg-156.

Belongs to the purine/pyrimidine phosphoribosyltransferase family. PyrE subfamily. In terms of assembly, homodimer. Requires Mg(2+) as cofactor.

The catalysed reaction is orotidine 5'-phosphate + diphosphate = orotate + 5-phospho-alpha-D-ribose 1-diphosphate. It functions in the pathway pyrimidine metabolism; UMP biosynthesis via de novo pathway; UMP from orotate: step 1/2. Functionally, catalyzes the transfer of a ribosyl phosphate group from 5-phosphoribose 1-diphosphate to orotate, leading to the formation of orotidine monophosphate (OMP). The polypeptide is Orotate phosphoribosyltransferase (Pseudoalteromonas translucida (strain TAC 125)).